Here is a 205-residue protein sequence, read N- to C-terminus: Ribosome maturation factor RimP (205 aa).

The segment covering 1-12 has biased composition (polar residues); sequence MSNAEAQASSDH. 2 disordered regions span residues 1–24 and 186–205; these read MSNA…APAH and FSHL…SEEA.

This sequence belongs to the RimP family.

The protein resides in the cytoplasm. Functionally, required for maturation of 30S ribosomal subunits. In Pseudarthrobacter chlorophenolicus (strain ATCC 700700 / DSM 12829 / CIP 107037 / JCM 12360 / KCTC 9906 / NCIMB 13794 / A6) (Arthrobacter chlorophenolicus), this protein is Ribosome maturation factor RimP.